The chain runs to 332 residues: Methionine synthase (332 aa).

Positions 211, 213, and 296 each coordinate Zn(2+).

The protein belongs to the archaeal MetE family. The cofactor is Zn(2+).

Its pathway is amino-acid biosynthesis; L-methionine biosynthesis via de novo pathway. In terms of biological role, catalyzes the transfer of a methyl group to L-homocysteine resulting in methionine formation. The physiological methyl donor is unknown. The chain is Methionine synthase from Saccharolobus islandicus (strain Y.G.57.14 / Yellowstone #1) (Sulfolobus islandicus).